We begin with the raw amino-acid sequence, 355 residues long: S-adenosylmethionine:tRNA ribosyltransferase-isomerase (355 aa).

Belongs to the QueA family. As to quaternary structure, monomer.

The protein localises to the cytoplasm. It catalyses the reaction 7-aminomethyl-7-carbaguanosine(34) in tRNA + S-adenosyl-L-methionine = epoxyqueuosine(34) in tRNA + adenine + L-methionine + 2 H(+). The protein operates within tRNA modification; tRNA-queuosine biosynthesis. Its function is as follows. Transfers and isomerizes the ribose moiety from AdoMet to the 7-aminomethyl group of 7-deazaguanine (preQ1-tRNA) to give epoxyqueuosine (oQ-tRNA). This is S-adenosylmethionine:tRNA ribosyltransferase-isomerase from Burkholderia orbicola (strain AU 1054).